We begin with the raw amino-acid sequence, 247 residues long: 1-(5-phosphoribosyl)-5-[(5-phosphoribosylamino)methylideneamino] imidazole-4-carboxamide isomerase (247 aa).

The active-site Proton acceptor is Asp-8. The Proton donor role is filled by Asp-131.

Belongs to the HisA/HisF family.

The protein localises to the cytoplasm. The catalysed reaction is 1-(5-phospho-beta-D-ribosyl)-5-[(5-phospho-beta-D-ribosylamino)methylideneamino]imidazole-4-carboxamide = 5-[(5-phospho-1-deoxy-D-ribulos-1-ylimino)methylamino]-1-(5-phospho-beta-D-ribosyl)imidazole-4-carboxamide. It participates in amino-acid biosynthesis; L-histidine biosynthesis; L-histidine from 5-phospho-alpha-D-ribose 1-diphosphate: step 4/9. The sequence is that of 1-(5-phosphoribosyl)-5-[(5-phosphoribosylamino)methylideneamino] imidazole-4-carboxamide isomerase from Methylobacillus flagellatus (strain ATCC 51484 / DSM 6875 / VKM B-1610 / KT).